A 145-amino-acid polypeptide reads, in one-letter code: Globin-1 (145 aa).

One can recognise a Globin domain in the interval 1 to 145 (GISADQAKAL…VIVPGMKAGY (145 aa)). Residues His63 and His92 each coordinate heme b.

Belongs to the globin family. As to quaternary structure, monomer.

The sequence is that of Globin-1 from Liolophura japonica (Chiton).